The primary structure comprises 493 residues: N-acetylglucosamine kinase 1 (493 aa).

The 464-residue stretch at 27 to 490 (ESSVLSSIVE…SIIGAAIGAA (464 aa)) folds into the Hexokinase domain. Residues 79-221 (TGDEHGQYLV…GLTLDVQSIL (143 aa)) form a hexokinase small subdomain region. The interval 222–479 (NDSLAVYSAG…IKVDLKLIEN (258 aa)) is hexokinase large subdomain.

It belongs to the hexokinase family. As to quaternary structure, interacts with histone deacetylase SIR2 under filamentation-inducing conditions.

The protein localises to the cytoplasm. It localises to the nucleus. The protein resides in the mitochondrion. The catalysed reaction is N-acetyl-D-glucosamine + ATP = N-acetyl-D-glucosamine 6-phosphate + ADP + H(+). It catalyses the reaction D-mannose + ATP = D-mannose 6-phosphate + ADP + H(+). It carries out the reaction D-glucose + ATP = D-glucose 6-phosphate + ADP + H(+). The enzyme catalyses D-glucosamine + ATP = D-glucosamine 6-phosphate + ADP + H(+). It functions in the pathway carbohydrate metabolism; hexose metabolism. Its pathway is carbohydrate degradation; glycolysis; D-glyceraldehyde 3-phosphate and glycerone phosphate from D-glucose: step 1/4. Its function is as follows. Component of the N-acetylglucosamine catabolic cascade that phosphorylates N-acetylglucosamine (GlcNAc), and allows the unique ability to utilise GlcNAc as carbon source. Converts GlcNAc to GlcNAc-6-P. Also able to phosphorylate glucose, glucosamine (GlcN), and mannose. Galactose, fructose, N-acetylmannosamine (ManNAc), mannosamine (ManN), galactosamine (GalN), and N-acetylgalactosamine (GalNAc) are not phosphorylated by HXK1. GlcNAc metabolism is closely associated with virulence and morphogenesis, and is involved in the cell wall synthesis. Acts both as a repressor and an activator of genes involved in maintaining cellular homeostasis. Contributes to white-opaque morphological transition and plays a role as a filamentation repressor. The protein is N-acetylglucosamine kinase 1 of Candida albicans (strain SC5314 / ATCC MYA-2876) (Yeast).